The primary structure comprises 942 residues: PH and SEC7 domain-containing protein C11E3.11c (942 aa).

Polar residues predominate over residues 1-18 (MSRNASNAYLKNGNSTPS). Disordered regions lie at residues 1–128 (MSRN…TRLN) and 259–308 (SRNL…ETTR). Residues 24 to 40 (PSSLSQRSKTSTRSSKP) show a composition bias toward low complexity. Composition is skewed to polar residues over residues 50–60 (WFKNESSSRHP), 90–125 (ASMS…SSRT), 271–284 (YGNS…SSNY), and 292–305 (NRQS…STSE). The SEC7 domain maps to 295-497 (SSLSIPKSTS…LSSYKSFASN (203 aa)). Residues 681 to 804 (PYIKQGILKF…WIDALNYWAA (124 aa)) form the PH domain.

In Schizosaccharomyces pombe (strain 972 / ATCC 24843) (Fission yeast), this protein is PH and SEC7 domain-containing protein C11E3.11c.